Here is a 186-residue protein sequence, read N- to C-terminus: ADP-ribosylation factor-like protein 6 (186 aa).

The N-myristoyl glycine moiety is linked to residue glycine 2. GTP-binding positions include 24–31 (GLDNSGKT), 69–73 (DMSGQ), and 130–133 (NKMD).

This sequence belongs to the small GTPase superfamily. Arf family. In terms of assembly, interacts with SEC61B, ARL6IP1, ARL6IP2, ARL6IP3, ARL6IP4 ARL6IP5 and ARL6IP6. Interacts (GTP-bound form) with the BBSome a complex that contains BBS1, BBS2, BBS4, BBS5, BBS7, BBS8/TTC8, BBS9 and BBIP10. Interacts (GTP-free form) with IFT27.

Its subcellular location is the cell projection. It localises to the cilium membrane. The protein resides in the cytoplasm. It is found in the cytoskeleton. The protein localises to the cilium axoneme. Its subcellular location is the cilium basal body. In terms of biological role, involved in membrane protein trafficking at the base of the ciliary organelle. Mediates recruitment onto plasma membrane of the BBSome complex which would constitute a coat complex required for sorting of specific membrane proteins to the primary cilia. Together with the BBSome complex and LTZL1, controls SMO ciliary trafficking and contributes to the sonic hedgehog (SHH) pathway regulation. May regulate cilia assembly and disassembly and subsequent ciliary signaling events such as the Wnt signaling cascade. Isoform 2 may be required for proper retinal function and organization. The sequence is that of ADP-ribosylation factor-like protein 6 (ARL6) from Bos taurus (Bovine).